A 223-amino-acid chain; its full sequence is GRF1-interacting factor 3 (223 aa).

Positions 179-223 (ANNAGPNDASGGGKPDGTNMSQSGADGQGGSAARHGGGDAKTEGK) are disordered. Residues 214-223 (GGGDAKTEGK) show a composition bias toward basic and acidic residues.

The protein belongs to the SS18 family. Interacts with GRF1. In terms of tissue distribution, predominantly expressed in shoot tips containing the shoot apical meristem (SAM) and flower buds. Also expressed in mature flowers.

Transcription coactivator that plays a role in the regulation of cell expansion in leaf and cotyledons tissues. Component of a network formed by miR396, the GRFs and their interacting factors (GIFs) acting in the regulation of meristem function, at least partially through the control of cell proliferation. GIFs are involved in the positive regulation of cell proliferation of lateral organs in a functionally redundant manner. The polypeptide is GRF1-interacting factor 3 (GIF3) (Arabidopsis thaliana (Mouse-ear cress)).